The following is a 295-amino-acid chain: Gamma-glutamyl-L-1-hydroxyisopropylamide hydrolase (295 aa).

The Glutamine amidotransferase type-1 domain occupies 5-221 (RILICDGNTE…LRESARSLVE (217 aa)). Catalysis depends on Cys-104, which acts as the Nucleophile. Residues His-200 and Glu-202 contribute to the active site.

The catalysed reaction is gamma-L-glutamyl-L-alaninol + H2O = L-alaninol + L-glutamate. Its function is as follows. Involved in the degradation of isopropylamine, which is a constituent of the herbicides atrazine. Catalyzes the hydrolysis of gamma-glutamyl-L-alaninol (GALO) to L-alaninol and L-glutamate. It can also uses gamma-glutamyl-isopropylamide, gamma-glutamyl-ethylamide, L-glutamine, and gamma-glutamyl-p-nitroanilide. The polypeptide is Gamma-glutamyl-L-1-hydroxyisopropylamide hydrolase (ipuF) (Pseudomonas sp).